Reading from the N-terminus, the 337-residue chain is ATP-dependent 6-phosphofructokinase (337 aa).

Residue Gly11 coordinates ATP. Residue 21–25 (RAVVR) coordinates ADP. ATP contacts are provided by residues 72–73 (RY) and 102–105 (GDGS). Mg(2+) is bound at residue Asp103. 125–127 (TID) is a substrate binding site. Asp127 functions as the Proton acceptor in the catalytic mechanism. Arg154 serves as a coordination point for ADP. Residues Arg162 and 169 to 171 (MGR) each bind substrate. ADP is bound by residues 185–187 (GAD), Lys212, and 214–216 (KNH). Residues Glu223, Arg245, and 251–254 (HILR) each bind substrate.

Belongs to the phosphofructokinase type A (PFKA) family. ATP-dependent PFK group I subfamily. Prokaryotic clade 'B1' sub-subfamily. As to quaternary structure, homotetramer. Mg(2+) is required as a cofactor.

It localises to the cytoplasm. It carries out the reaction beta-D-fructose 6-phosphate + ATP = beta-D-fructose 1,6-bisphosphate + ADP + H(+). It participates in carbohydrate degradation; glycolysis; D-glyceraldehyde 3-phosphate and glycerone phosphate from D-glucose: step 3/4. With respect to regulation, allosterically activated by ADP and other diphosphonucleosides, and allosterically inhibited by phosphoenolpyruvate. Catalyzes the phosphorylation of D-fructose 6-phosphate to fructose 1,6-bisphosphate by ATP, the first committing step of glycolysis. This chain is ATP-dependent 6-phosphofructokinase, found in Streptococcus pyogenes serotype M1.